A 244-amino-acid chain; its full sequence is Neurogenin-1 (244 aa).

Disordered regions lie at residues 1 to 27 and 39 to 82; these read MPAP…SSFL and LAST…ARVR. Residues 10–27 are compositionally biased toward low complexity; sequence SDLDCSSSNSSSDLSSFL. Residues 93-145 enclose the bHLH domain; that stretch reads SRRVKANDRERNRMHNLNAALDALRSVLPSFPDDTKLTKIETLRFAYNYIWAL.

Efficient DNA binding requires dimerization with another bHLH protein. Expression restricted to the embryonic nervous system.

It localises to the nucleus. In terms of biological role, acts as a transcriptional regulator. Involved in the initiation of neuronal differentiation. Activates transcription by binding to the E box (5'-CANNTG-3'). Associates with chromatin to enhancer regulatory elements in genes encoding key transcriptional regulators of neurogenesis. This is Neurogenin-1 (Neurog1) from Mus musculus (Mouse).